We begin with the raw amino-acid sequence, 250 residues long: Functional amyloid subunit FapC (250 aa).

A signal peptide spans 1–24; that stretch reads MKPTMALKPLVFALAALMAVAAQA. Residues 62 to 95 form a FapC_R1 repeat; it reads NNAGANGSLSNSKGNLGANIAAGSGNQQDNAAAI. The linker 1 stretch occupies residues 96-126; sequence TSSAGDAATVFAVADIYQESKDNKFTNKGTQ. One copy of the FapC_R2 repeat lies at 127–160; the sequence is NNALLNNSANNSSGNVGVNVAAGQGNQQKNNLAI. Residues 161–199 are linker 2; sequence VTADGKNVAAASNTEQVSLDNHFLNEASSKHSYKPQYVV. A FapC_R3 repeat occupies 200 to 233; the sequence is NNAGLLNSANNASGNIGVNVAAGAGNQQSNTLTL. The Cys-X-X-Cys motif lies at 237–240; it reads CTVC.

It belongs to the FapB/FapC family. As to quaternary structure, the major component of purified amyloid fibrils. Forms fibrils in vitro; in the presence of FapA the fibrils are about 50% wider. Interacts with FapA. Fibrillates in vitro; this is inhibited by FapA. Fibrils are resistant to boiling in 2% (weight/vol) SDS and require &gt;90% (vol/vol) formic acid to dissolve.

Its subcellular location is the fimbrium. It is found in the secreted. In terms of biological role, the major functional amyloid subunit in this bacterium. Intrinsically disordered in its monomeric state. Upon overexpression of the endogenous six-gene locus (fapA-fapF) in situ, cells form large clumps during liquid growth, make large amounts of biofilm and produce amyloid fibrils. Expression of the 6 gene operon in E.coli strain BL21(DE3) induces flocculation and biofilm formation with copious extracellular fibrils. This Pseudomonas fluorescens protein is Functional amyloid subunit FapC.